A 514-amino-acid chain; its full sequence is CBL-interacting protein kinase 25 (514 aa).

Positions 21-281 constitute a Protein kinase domain; sequence YEFGPLVGEG…IPEIMEMRWF (261 aa). ATP contacts are provided by residues 27 to 35 and lysine 50; that span reads VGEGNFAKV. Catalysis depends on aspartate 149, which acts as the Proton acceptor. Positions 167 to 196 are activation loop; it reads DFGLSALADMERREAHLQTVCGTPLFLAPE. Residues 303-340 form a disordered region; the sequence is GLDGEPELYDSDTDTIESSSSSESPTPVAGTPRGMHTS. Over residues 304-317 the composition is skewed to acidic residues; that stretch reads LDGEPELYDSDTDT. The span at 318-329 shows a compositional bias: low complexity; it reads IESSSSSESPTP. The 73-residue stretch at 323–395 folds into the NAF domain; sequence SSESPTPVAG…PSFDLSGLFE (73 aa). Residues 398-427 form a PPI region; it reads GERMRFVSGAPVADIIAKLQEIAGMVSFTA.

This sequence belongs to the protein kinase superfamily. CAMK Ser/Thr protein kinase family. SNF1 subfamily. Mn(2+) is required as a cofactor.

The catalysed reaction is L-seryl-[protein] + ATP = O-phospho-L-seryl-[protein] + ADP + H(+). It carries out the reaction L-threonyl-[protein] + ATP = O-phospho-L-threonyl-[protein] + ADP + H(+). In terms of biological role, CIPK serine-threonine protein kinases interact with CBL proteins. Binding of a CBL protein to the regulatory NAF domain of CIPK protein lead to the activation of the kinase in a calcium-dependent manner. This is CBL-interacting protein kinase 25 (CIPK25) from Oryza sativa subsp. japonica (Rice).